The following is a 611-amino-acid chain: tRNA uridine 5-carboxymethylaminomethyl modification enzyme MnmG (611 aa).

Residues 8–13 (GAGHAG), V120, and S175 each bind FAD. An NAD(+)-binding site is contributed by 268-282 (GPRYCPSIEDKIVRF). Q365 lines the FAD pocket.

The protein belongs to the MnmG family. In terms of assembly, homodimer. Heterotetramer of two MnmE and two MnmG subunits. The cofactor is FAD.

Its subcellular location is the cytoplasm. In terms of biological role, NAD-binding protein involved in the addition of a carboxymethylaminomethyl (cmnm) group at the wobble position (U34) of certain tRNAs, forming tRNA-cmnm(5)s(2)U34. This is tRNA uridine 5-carboxymethylaminomethyl modification enzyme MnmG from Mycoplasmoides gallisepticum (strain R(low / passage 15 / clone 2)) (Mycoplasma gallisepticum).